Reading from the N-terminus, the 355-residue chain is Uroporphyrinogen decarboxylase (355 aa).

Residues 36 to 40 (RQAGR), Asp-85, Tyr-160, Ser-215, and His-334 each bind substrate.

Belongs to the uroporphyrinogen decarboxylase family. Homodimer.

Its subcellular location is the cytoplasm. It catalyses the reaction uroporphyrinogen III + 4 H(+) = coproporphyrinogen III + 4 CO2. It participates in porphyrin-containing compound metabolism; protoporphyrin-IX biosynthesis; coproporphyrinogen-III from 5-aminolevulinate: step 4/4. Catalyzes the decarboxylation of four acetate groups of uroporphyrinogen-III to yield coproporphyrinogen-III. This is Uroporphyrinogen decarboxylase from Rhodococcus jostii (strain RHA1).